Here is a 570-residue protein sequence, read N- to C-terminus: Interleukin-1 receptor accessory protein (570 aa).

An N-terminal signal peptide occupies residues 1–20; it reads MTLLWCVVSLYFYGILQSDA. Ig-like C2-type domains lie at 21-128, 136-226, and 242-350; these read SERC…VAFP, SCFN…FHLT, and PPVI…VKQK. Topologically, residues 21–367 are extracellular; it reads SERCDDWGLD…VELACGFGAT (347 aa). 5 disulfides stabilise this stretch: cysteine 24–cysteine 122, cysteine 47–cysteine 114, cysteine 137–cysteine 181, cysteine 160–cysteine 212, and cysteine 266–cysteine 332. A glycan (N-linked (GlcNAc...) asparagine) is linked at asparagine 57. Residues 69 to 85 are essential for interaction with PTPRD; the sequence is IWYWTRQDRDLEEPINF. N-linked (GlcNAc...) asparagine glycosylation is found at asparagine 107, asparagine 111, and asparagine 118. Residues asparagine 196, asparagine 209, and asparagine 299 are each glycosylated (N-linked (GlcNAc...) asparagine). A helical transmembrane segment spans residues 368–388; that stretch reads VLLVVILIVVYHVYWLEMVLF. Over 389–570 the chain is Cytoplasmic; sequence YRAHFGTDET…GLSYSSLKNV (182 aa). One can recognise a TIR domain in the interval 403–546; that stretch reads KEYDIYVSYA…RFWKQLQVAM (144 aa). Glutamate 482 is a catalytic residue. A disordered region spans residues 549 to 570; that stretch reads KKSPRRSSSDEQGLSYSSLKNV. Phosphoserine is present on serine 557. Over residues 558–570 the composition is skewed to polar residues; the sequence is DEQGLSYSSLKNV.

This sequence belongs to the interleukin-1 receptor family. The interleukin-36 receptor complex is a heterodimer of IL1RL2 and IL1RAP; the association is inhibited by IL36RN. The interleukin-1 receptor complex is a heterodimer of IL1R1 and IL1RAP. Associates with IL1R2 to form a non-signaling interleukin-1 receptor complex. Interacts with IL-33-bound IL1RL1 to form the minimal interleukin-33 signaling complex with a 1:1:1 stoichiometry. Interacts with KIT (independently of stimulation with KITLG/SCF). A mast cell-specific KITLG/SCF-induced interleukin-33 signaling complex contains IL1RL1, IL1RAP, KIT and MYD88. Interacts (via the first immunoglobilin domain) with PTPRD (via the third immunoglobilin domain); induces pre- and postsynaptic differentiation of neurons.

The protein resides in the cell membrane. It is found in the secreted. It catalyses the reaction NAD(+) + H2O = ADP-D-ribose + nicotinamide + H(+). In terms of biological role, coreceptor for IL1RL2 in the IL-36 signaling system. Coreceptor with IL1R1 in the IL-1 signaling system. Associates with IL1R1 bound to IL1B to form the high affinity interleukin-1 receptor complex which mediates interleukin-1-dependent activation of NF-kappa-B and other pathways. Signaling involves the recruitment of adapter molecules such as TOLLIP, MYD88, and IRAK1 or IRAK2 via the respective TIR domains of the receptor/coreceptor subunits. Recruits TOLLIP to the signaling complex. Does not bind to interleukin-1 alone; binding of IL1RN to IL1R1, prevents its association with IL1R1 to form a signaling complex. The cellular response is modulated through a non-signaling association with the membrane IL1R2 decoy receptor. Coreceptor for IL1RL1 in the IL-33 signaling system. Can bidirectionally induce pre- and postsynaptic differentiation of neurons by trans-synaptically binding to PTPRD. May play a role in IL1B-mediated costimulation of IFNG production from T-helper 1 (Th1) cells. Functionally, associates with secreted ligand-bound IL1R2 and increases the affinity of secreted IL1R2 for IL1B; this complex formation may be the dominant mechanism for neutralization of IL1B by secreted/soluble receptors. Enhances the ability of secreted IL1R1 to inhibit IL-33 signaling. This is Interleukin-1 receptor accessory protein (IL1RAP) from Macaca mulatta (Rhesus macaque).